Here is a 33-residue protein sequence, read N- to C-terminus: Brevinin-2JD (33 aa).

A disulfide bridge connects residues Cys-27 and Cys-33.

As to expression, expressed by the skin glands.

The protein localises to the secreted. Functionally, has antibacterial activity against E.coli ATCC 25992 (MIC=38 uM), E.coli CIB 84492 (MIC=38 uM), S.aureus ATCC 25923 (MIC=19 uM) and S.aureus CIB 85462 (MIC=19 uM). Has antifungal activity against C.albicans (MIC=19 uM). Has weak hemolytic activity against rabbit erythrocytes. The chain is Brevinin-2JD from Odorrana jingdongensis (Jingdong frog).